The primary structure comprises 2291 residues: MKGHQFKSWIFELREIVREIKNSHYFLDSWTQFNSVGSFIHIFFHQERFRKLLDPRIFSILLLRNSQGSTSNRYFTIKGVVLFVVAALLYRINNRNMVESKNLYLKGLLPIPMNSIGPRNDTSEESFGSSNINRLIVSLLYLTKGKKISESCFRDPKESTWVLPITQKCIMPESNWSSRWWRNWIGKKRDFCCKISNQTVAGIDISFKEKDIKYLEFLFVYYMDDPIRKGHDWELFDRLSPSKRRNIINLNSGQLFEILVKDWICYLMFAFREKIPIEVEGFFKQQGAGSTIQSNDIEHVSHLFSRNKWAISLQNCAQFHMWQFHQDLFVSWGKNPHESDFLRKISRENWIWLDNVWLVNKDRFFSKVRNVSSNIQYDSTRSSFVQVTDSSQLNGSSDQFIDPFDSISNEDSEYHYHTLINQREIQQLKERSILLDPSFIQTEGREIESDRFPKYLSGYSSMPRLFTEREKRMNNHLLPEESEEFLGNPTRAIRSFFSDRWSELHLGSNPTERSTRDQKLLKKEQDVSFVPSRRSENKEIVNIFKIITYLQNTVSIHSISSDLGCDMVPKDELDMDSSNKISFLNKNPFFDLFHLFHERKRGGYTLRHESEERFQEMADLFTLSITEPDLVYHKGFAFSIDSYGLDQRQFLKEVFNFRDESKKKSLLVLPPIFYEENESFYRRIRKNWVRISCGNYLEDPKRVVFASNNIMEAVNQYRLIRNMIQIQFQYSPYGYIRNVLNRFFLMKRPDRNFEYGIQRDLIGNDTLNHRTIMKDTINQHLSNLKKSQKKWFDPLIFLSQTERSINRDPNAYRYKWSNGSKNFQEHLEHFVSERKSRFQVVFDQLCINQYSIDWSEVIDKKDLSKSLRFFLSKLLRFFLSKLLLFLSKLLLFLSNSLPFFFVSFENIPIHRSEIHIYELKGPNDQLCNQLLESIGLQIVHLKKLKPFLLDDHNTSQKSKFLINGGTISPFLFNKIPKWMIDSFHTRKNRRKSFDNTDSYFSIVSHDQDNWLNPVKPFQRSSLISSFSKANRLRFLNNPHHFCFYCNKRFPFYVEKARLNNSDFTYGQFLTILFIHNKIFSSCGGKKKHAFLERDTISPSSIESQVSNIFISNDFPQSGDERYNLYKSFHFPIRSDPLVRRAIYSIADISGTPLIEGQRVNFERTYCQTLSDMNLSDSEEKSLHQYLNFNSNMGLIHTPCSEKYLQRKKRSLCLKKCVDKGQMDRTFQRDSAFSTLSKWNLIQTYMPWFFTSTGYKYLNLIFLDTFSDLLRILSSSQKFVSIFHDIMHGLDISWRILQKKLCLPQRNLISEISSKSLHNLLLSEEMIHRNNESSLISTHLRSPNVREVLYSILFLLLVAGYIVRTHLLFVSRAYSELQTEFEKIKSLMIPSYMIELRKLLDRYPTSELNSFWLKNLFLVALEQLGDCLEEIRGSGGNMLWGGDPAYGVKSIRSKKKDLKINFIDIIDLISIIPNPINRITFSRNTRHLSHTSKEIYSLIRKRKNVSGDWIDDKIESWVANSDSIDDKEREFLVQFSTLRAEKRIDQILLSLTHSDHLSKNDSGYQMIEQPGTIYLRYLVDIHKKYLMNYEFNTSCLAERRIFLAHYQTITYSQTSCGANSFHFPSHGKPFSLRLALSPSRSILVIGSIGTGRSYLVKYLATNSYVPFITVFLNKFLDNKPKGFFIDDIDIDDSDDIDASNDIDRELDTELELLTMMNALTMDMMSEIDRFYITLQFELAKAMSPCIIWIPNIHDLDVNESSYLALGLLVNSLSRDCERCSTRNILVIASTHIPQKVDPALIAPNKLNTCIKIRRLLIPQQRKHFFTLSYTRGFHLEKKMFHTNGFESITMGSSARDLVALTNEALSISITQKKSIIDTNTIRSALHRQTWDLRSQVRSVQDHGILFYQIGRAVAQNVLISNCPIDPISIYMKKKSCNEGDSYLYKWYFELGTSMKKFTILLYLLSCSAGSVAQDLWSLPVPDEKNRITSYGFIENDSDLVHGLLEVQGALVGSSRTEKDCSQFDNDRVTLLFRSEPRDPLYMMQDGSCSIVDQRFLYEKYESEFEEGEGEGVLDPQQIEEDLFNHIVWAPRIWRPRGFLFDCIERPNELGFPYLAGSFRGKRIIYDEKYELQENDSEFLQSGTMQYQRRDRSSKEQGFFRISQFIWDPADPLFFLFKDQPFVSVFSHREFFADEEMSKGLLTSQTDPPTSIYKRWFIKNTQEKHFELLIQRQRWLRTNSSLSNGFFRSNTRSESYQYLSNLFLSNGTLLDRMTKTLLKKRWLFSDEMKTGFM.

ATP is bound at residue glycine 1645–serine 1652.

Belongs to the Ycf2 family.

It localises to the plastid. The protein resides in the chloroplast stroma. Its function is as follows. Probable ATPase of unknown function. Its presence in a non-photosynthetic plant (Epifagus virginiana) and experiments in tobacco indicate that it has an essential function which is probably not related to photosynthesis. This is Protein Ycf2 from Olimarabidopsis pumila (Dwarf rocket).